The sequence spans 285 residues: NADPH-dependent 7-cyano-7-deazaguanine reductase (285 aa).

91–93 (IES) contributes to the substrate binding site. 93–94 (SK) is an NADPH binding site. The active-site Thioimide intermediate is cysteine 193. The active-site Proton donor is aspartate 200. 232–233 (HE) contacts substrate. Position 261 to 262 (261 to 262 (RG)) interacts with NADPH.

This sequence belongs to the GTP cyclohydrolase I family. QueF type 2 subfamily. Homodimer.

It is found in the cytoplasm. The enzyme catalyses 7-aminomethyl-7-carbaguanine + 2 NADP(+) = 7-cyano-7-deazaguanine + 2 NADPH + 3 H(+). It functions in the pathway tRNA modification; tRNA-queuosine biosynthesis. Functionally, catalyzes the NADPH-dependent reduction of 7-cyano-7-deazaguanine (preQ0) to 7-aminomethyl-7-deazaguanine (preQ1). This Shewanella baltica (strain OS223) protein is NADPH-dependent 7-cyano-7-deazaguanine reductase.